The chain runs to 64 residues: Neurotoxin BmK-II (64 aa).

Residues 2 to 64 (RDAYIAKPHN…VPIRIPGNCH (63 aa)) form the LCN-type CS-alpha/beta domain. 4 disulfide bridges follow: Cys-12-Cys-63, Cys-16-Cys-36, Cys-22-Cys-46, and Cys-26-Cys-48.

The protein belongs to the long (4 C-C) scorpion toxin superfamily. Sodium channel inhibitor family. Alpha subfamily. In terms of tissue distribution, expressed by the venom gland.

The protein localises to the secreted. Functionally, binds to sodium channels (Nav) and inhibits the inactivation of the activated channels, thereby blocking neuronal transmission. This toxin is active against mammals and insects. BmK-II is 6-fold less toxic than BmK-I. The sequence is that of Neurotoxin BmK-II from Olivierus martensii (Manchurian scorpion).